A 232-amino-acid chain; its full sequence is Glutathione-specific gamma-glutamylcyclotransferase (232 aa).

Valine 10–serine 15 contributes to the substrate binding site. Glutamate 115 functions as the Proton acceptor in the catalytic mechanism.

This sequence belongs to the gamma-glutamylcyclotransferase family. ChaC subfamily.

It is found in the cytoplasm. Its subcellular location is the nucleus. The enzyme catalyses glutathione = L-cysteinylglycine + 5-oxo-L-proline. Catalyzes the cleavage of glutathione into 5-oxo-L-proline and a Cys-Gly dipeptide. Acts specifically on glutathione, but not on other gamma-glutamyl peptides. Allows utilization of gluthathione through subsequent cleavage of the Cys-Gly dipeptide by Cys-Gly metallodipeptidase DUG1. This is Glutathione-specific gamma-glutamylcyclotransferase from Saccharomyces cerevisiae (strain ATCC 204508 / S288c) (Baker's yeast).